A 142-amino-acid polypeptide reads, in one-letter code: Large ribosomal subunit protein uL11 (142 aa).

It belongs to the universal ribosomal protein uL11 family. As to quaternary structure, part of the ribosomal stalk of the 50S ribosomal subunit. Interacts with L10 and the large rRNA to form the base of the stalk. L10 forms an elongated spine to which L12 dimers bind in a sequential fashion forming a multimeric L10(L12)X complex. In terms of processing, one or more lysine residues are methylated.

Forms part of the ribosomal stalk which helps the ribosome interact with GTP-bound translation factors. The sequence is that of Large ribosomal subunit protein uL11 from Idiomarina loihiensis (strain ATCC BAA-735 / DSM 15497 / L2-TR).